The chain runs to 397 residues: Elongation factor Tu (397 aa).

Positions 10–206 (KPHVNIGTIG…AVDTSIPQPE (197 aa)) constitute a tr-type G domain. The tract at residues 19–26 (GHIDHGKT) is G1. A GTP-binding site is contributed by 19–26 (GHIDHGKT). Thr26 provides a ligand contact to Mg(2+). The tract at residues 62-66 (GITIS) is G2. Residues 83 to 86 (DCPG) are G3. Residues 83-87 (DCPGH) and 138-141 (NKSD) contribute to the GTP site. Positions 138 to 141 (NKSD) are G4. The G5 stretch occupies residues 176-178 (SAL).

The protein belongs to the TRAFAC class translation factor GTPase superfamily. Classic translation factor GTPase family. EF-Tu/EF-1A subfamily. Monomer.

It is found in the cytoplasm. It carries out the reaction GTP + H2O = GDP + phosphate + H(+). In terms of biological role, GTP hydrolase that promotes the GTP-dependent binding of aminoacyl-tRNA to the A-site of ribosomes during protein biosynthesis. The protein is Elongation factor Tu of Salinispora arenicola (strain CNS-205).